The sequence spans 95 residues: Small ribosomal subunit protein bS20 (95 aa).

Disordered stretches follow at residues 1–26 (MALR…RSRK) and 76–95 (KSRL…AQPA). The span at 80-95 (AKALNKAKAAQAAQPA) shows a compositional bias: low complexity.

It belongs to the bacterial ribosomal protein bS20 family.

Its function is as follows. Binds directly to 16S ribosomal RNA. In Deinococcus geothermalis (strain DSM 11300 / CIP 105573 / AG-3a), this protein is Small ribosomal subunit protein bS20.